The sequence spans 911 residues: Probable 2-oxoadipate dehydrogenase complex component E1 homolog (911 aa).

The protein belongs to the alpha-ketoglutarate dehydrogenase family. The cofactor is thiamine diphosphate.

Its subcellular location is the mitochondrion. The enzyme catalyses N(6)-[(R)-lipoyl]-L-lysyl-[protein] + 2-oxoadipate + H(+) = N(6)-[(R)-S(8)-glutaryldihydrolipoyl]-L-lysyl-[protein] + CO2. In terms of biological role, 2-oxoadipate dehydrogenase (E1a) component of the 2-oxoadipate dehydrogenase complex (OADHC). Participates in the first step, rate limiting for the overall conversion of 2-oxoadipate (alpha-ketoadipate) to glutaryl-CoA and CO(2) catalyzed by the whole OADHC. Catalyzes the irreversible decarboxylation of 2-oxoadipate via the thiamine diphosphate (ThDP) cofactor and subsequent transfer of the decarboxylated acyl intermediate on an oxidized dihydrolipoyl group that is covalently amidated to the E2 enzyme (dihydrolipoyllysine-residue succinyltransferase or DLST). The polypeptide is Probable 2-oxoadipate dehydrogenase complex component E1 homolog (Caenorhabditis elegans).